Reading from the N-terminus, the 21-residue chain is Azemiopsin (21 aa).

The span at 1–14 shows a compositional bias: pro residues; that stretch reads DNWWPKPPHQGPRP. The disordered stretch occupies residues 1 to 21; sequence DNWWPKPPHQGPRPPRPRPKP. Implicated in receptor binding regions lie at residues 3–6, 8–11, and 13–14; these read WWPK, PHQG, and RP.

In terms of assembly, monomer. Expressed by the venom gland.

It is found in the secreted. Its function is as follows. In vitro, reversibly blocks human muscle-type nicotinic acetylcholine receptors (nAChR) alpha-1-beta-1-epsilon-delta/CHRNA1-CHRNB1-CHRNE-CHRND (EC(50)=0.44 uM) and alpha-1-beta-1-gamma-delta/CHRNA1-CHRNB1-CHRNG-CHRND (EC(50)=1.56 uM). Binds to nAChR from T.californica (IC(50)=0.03-0.18 uM), human neuronal nAChR alpha-7/CHRNA7 (IC(50)=22 uM) and acetylcholine-binding proteins (AChBP) from L.stagnalis (IC(50)=63 uM) and A.californica (IC(50)=230 uM). The sequence is that of Azemiopsin from Azemiops feae (Fea's viper).